Consider the following 155-residue polypeptide: Transcription antitermination protein NusB (155 aa).

It belongs to the NusB family.

In terms of biological role, involved in transcription antitermination. Required for transcription of ribosomal RNA (rRNA) genes. Binds specifically to the boxA antiterminator sequence of the ribosomal RNA (rrn) operons. The sequence is that of Transcription antitermination protein NusB from Vibrio campbellii (strain ATCC BAA-1116).